The chain runs to 137 residues: Large ribosomal subunit protein uL16c (137 aa).

Belongs to the universal ribosomal protein uL16 family. In terms of assembly, part of the 50S ribosomal subunit.

Its subcellular location is the plastid. The protein localises to the chloroplast. The sequence is that of Large ribosomal subunit protein uL16c from Rhodomonas salina (Cryptomonas salina).